A 156-amino-acid chain; its full sequence is Transcriptional repressor NrdR (156 aa).

The segment at 3–34 is a zinc-finger region; it reads CPKCNSTHSRVVDSRHADEANAIRRRRECENC. Residues 49–139 form the ATP-cone domain; that stretch reads LIVVKKDGTR…VYKEFKDVDQ (91 aa).

It belongs to the NrdR family. Zn(2+) is required as a cofactor.

Negatively regulates transcription of bacterial ribonucleotide reductase nrd genes and operons by binding to NrdR-boxes. The protein is Transcriptional repressor NrdR of Staphylococcus epidermidis (strain ATCC 35984 / DSM 28319 / BCRC 17069 / CCUG 31568 / BM 3577 / RP62A).